The sequence spans 308 residues: Pantothenate kinase (308 aa).

G93 to S100 contacts ATP.

It belongs to the prokaryotic pantothenate kinase family.

The protein resides in the cytoplasm. The enzyme catalyses (R)-pantothenate + ATP = (R)-4'-phosphopantothenate + ADP + H(+). Its pathway is cofactor biosynthesis; coenzyme A biosynthesis; CoA from (R)-pantothenate: step 1/5. The chain is Pantothenate kinase from Corynebacterium diphtheriae (strain ATCC 700971 / NCTC 13129 / Biotype gravis).